A 236-amino-acid chain; its full sequence is ATP synthase subunit a (236 aa).

A run of 5 helical transmembrane segments spans residues 17-37 (LSDMLMITITCLIVFIIAVAA), 75-95 (FLTLGVTLIMYVFVANMLGLP), 112-132 (DATVTLTLAVMVVALTHYYGV), 174-194 (IYAGEILLGLLASLGTHYGVL), and 208-228 (FSIFVGTIQAFIFTMLTMVYM).

Belongs to the ATPase A chain family. F-type ATPases have 2 components, CF(1) - the catalytic core - and CF(0) - the membrane proton channel. CF(1) has five subunits: alpha(3), beta(3), gamma(1), delta(1), epsilon(1). CF(0) has three main subunits: a(1), b(2) and c(9-12). The alpha and beta chains form an alternating ring which encloses part of the gamma chain. CF(1) is attached to CF(0) by a central stalk formed by the gamma and epsilon chains, while a peripheral stalk is formed by the delta and b chains.

The protein resides in the cell membrane. Functionally, key component of the proton channel; it plays a direct role in the translocation of protons across the membrane. In Geobacillus stearothermophilus (Bacillus stearothermophilus), this protein is ATP synthase subunit a.